The chain runs to 191 residues: Calcium-binding protein L (191 aa).

Residue Gly2 is the site of N-myristoyl glycine attachment. EF-hand domains follow at residues 25 to 59 (EQVS…RFKD), 60 to 95 (YDDA…ITKS), and 96 to 131 (PVSD…ALNT). Residues Asp73, Asp75, Asn77, Arg79, and Glu84 each coordinate Ca(2+).

The protein belongs to the recoverin family.

The polypeptide is Calcium-binding protein L (cbpL) (Dictyostelium discoideum (Social amoeba)).